The chain runs to 311 residues: Pyrimidine-specific ribonucleoside hydrolase RihA (311 aa).

Residue histidine 240 is part of the active site.

The protein belongs to the IUNH family. RihA subfamily.

Hydrolyzes cytidine or uridine to ribose and cytosine or uracil, respectively. This is Pyrimidine-specific ribonucleoside hydrolase RihA from Salmonella gallinarum (strain 287/91 / NCTC 13346).